We begin with the raw amino-acid sequence, 138 residues long: MLKEFREFAMKGNVVDLAVGVIIGAAFGAIVTSLVGDVIMPLIGAVTGGLDFSNYFTPLSKAVTATNLADAKKQGAVLAWGSFLTLTINFIIIAFVLFLVIRAINTLKRKEEAAPAAPPKPSAEVELLTEIRDLLKKS.

2 helical membrane-spanning segments follow: residues 19–39 (VGVI…GDVI) and 81–101 (GSFL…FLVI).

It belongs to the MscL family. In terms of assembly, homopentamer.

It is found in the cell inner membrane. Its function is as follows. Channel that opens in response to stretch forces in the membrane lipid bilayer. May participate in the regulation of osmotic pressure changes within the cell. This is Large-conductance mechanosensitive channel from Bradyrhizobium diazoefficiens (strain JCM 10833 / BCRC 13528 / IAM 13628 / NBRC 14792 / USDA 110).